A 129-amino-acid chain; its full sequence is Small ribosomal subunit protein uS11 (129 aa).

The protein belongs to the universal ribosomal protein uS11 family. As to quaternary structure, part of the 30S ribosomal subunit. Interacts with proteins S7 and S18. Binds to IF-3.

Functionally, located on the platform of the 30S subunit, it bridges several disparate RNA helices of the 16S rRNA. Forms part of the Shine-Dalgarno cleft in the 70S ribosome. The sequence is that of Small ribosomal subunit protein uS11 from Azobacteroides pseudotrichonymphae genomovar. CFP2.